Reading from the N-terminus, the 494-residue chain is MKYNDLRDFLTLLEQQGELKRITLPVDPHLEITEIADRTLRAGGPALLFENPKGYSMPVLCNLFGTPKRVAMGMGQEDVSALREVGKLLAFLKEPEPPKGFRDLFDKLPQFKQVLNMPTKRLRGAPCQQKIVSGDDVDLNRIPIMTCWPEDAAPLITWGLTVTRGPHKERQNLGIYRQQLIGKNKLIMRWLSHRGGALDYQEWCAAHPGERFPVSVALGADPATILGAVTPVPDTLSEYAFAGLLRGTKTEVVKCISNDLEVPASAEIVLEGYIEQGETAPEGPYGDHTGYYNEVDSFPVFTVTHITQREDAIYHSTYTGRPPDEPAVLGVALNEVFVPILQKQFPEIVDFYLPPEGCSYRLAVVTIKKQYAGHAKRVMMGVWSFLRQFMYTKFVIVCDDDVNARDWNDVIWAITTRMDPARDTVLVENTPIDYLDFASPVSGLGSKMGLDATNKWPGETQREWGRPIKKDPDVVAHIDAIWDELAIFNNGKSA.

Asparagine 172 lines the Mn(2+) pocket. Residues 175–177 (IYR), 189–191 (RWL), and 194–195 (RG) each bind prenylated FMN. Glutamate 238 contacts Mn(2+). Catalysis depends on aspartate 287, which acts as the Proton donor.

The protein belongs to the UbiD family. As to quaternary structure, homohexamer. Prenylated FMN is required as a cofactor. Mn(2+) serves as cofactor.

It is found in the cell membrane. The enzyme catalyses a 4-hydroxy-3-(all-trans-polyprenyl)benzoate + H(+) = a 2-(all-trans-polyprenyl)phenol + CO2. It functions in the pathway cofactor biosynthesis; ubiquinone biosynthesis. In terms of biological role, catalyzes the decarboxylation of 3-octaprenyl-4-hydroxy benzoate to 2-octaprenylphenol, an intermediate step in ubiquinone biosynthesis. This chain is 3-octaprenyl-4-hydroxybenzoate carboxy-lyase, found in Escherichia coli O139:H28 (strain E24377A / ETEC).